We begin with the raw amino-acid sequence, 637 residues long: Transcription factor PHYTOCHROME INTERACTING FACTOR-LIKE 15 (637 aa).

Residues 35–46 (FFGGTGGGGGGS) are compositionally biased toward gly residues. 3 disordered regions span residues 35–54 (FFGGTGGGGGGSSSRAQERQ), 146–213 (ASLP…EGVM), and 356–397 (ECSA…RRRR). Polar residues predominate over residues 149–170 (PASNHNGATNNRNAPVATTTTR). Positions 384-397 (RTAEVHNLSERRRR) are basic motif. Positions 384-397 (RTAEVHNLSERRRR) are enriched in basic and acidic residues. A bHLH domain is found at 384–433 (RTAEVHNLSERRRRDRINEKMRALQELIPNCNKIDKASMLDEAIEYLKTL). The interval 398–433 (DRINEKMRALQELIPNCNKIDKASMLDEAIEYLKTL) is helix-loop-helix motif. The disordered stretch occupies residues 601–637 (GDNENFRIPSSAQTKSSQFSDGTGKGTNARERDGAET). Over residues 608 to 621 (IPSSAQTKSSQFSD) the composition is skewed to polar residues. The segment covering 628 to 637 (NARERDGAET) has biased composition (basic and acidic residues).

It belongs to the bHLH protein family. In terms of assembly, interacts with LF and PRR1.

It is found in the nucleus. In terms of biological role, transcription factor that may act as negative regulator of phyB-dependent light signal transduction. The chain is Transcription factor PHYTOCHROME INTERACTING FACTOR-LIKE 15 from Oryza sativa subsp. japonica (Rice).